The chain runs to 132 residues: Small ribosomal subunit protein uS8 (132 aa).

This sequence belongs to the universal ribosomal protein uS8 family. Part of the 30S ribosomal subunit. Contacts proteins S5 and S12.

Its function is as follows. One of the primary rRNA binding proteins, it binds directly to 16S rRNA central domain where it helps coordinate assembly of the platform of the 30S subunit. This chain is Small ribosomal subunit protein uS8, found in Streptococcus pyogenes serotype M49 (strain NZ131).